Here is a 207-residue protein sequence, read N- to C-terminus: Holliday junction branch migration complex subunit RuvA (207 aa).

The tract at residues 1 to 65 (MIGRIRGVIL…EDAQLLYGFN (65 aa)) is domain I. The segment at 66-143 (QKQERALFRE…KGLNGDLFEQ (78 aa)) is domain II. Positions 144–158 (NGDIELPASASSKAP) are flexible linker. The domain III stretch occupies residues 159–207 (SAADIEAEASAALIALGYKPQEAAKMISRVATAGADSETLIKEALRAAI).

Belongs to the RuvA family. As to quaternary structure, homotetramer. Forms an RuvA(8)-RuvB(12)-Holliday junction (HJ) complex. HJ DNA is sandwiched between 2 RuvA tetramers; dsDNA enters through RuvA and exits via RuvB. An RuvB hexamer assembles on each DNA strand where it exits the tetramer. Each RuvB hexamer is contacted by two RuvA subunits (via domain III) on 2 adjacent RuvB subunits; this complex drives branch migration. In the full resolvosome a probable DNA-RuvA(4)-RuvB(12)-RuvC(2) complex forms which resolves the HJ.

The protein localises to the cytoplasm. The RuvA-RuvB-RuvC complex processes Holliday junction (HJ) DNA during genetic recombination and DNA repair, while the RuvA-RuvB complex plays an important role in the rescue of blocked DNA replication forks via replication fork reversal (RFR). RuvA specifically binds to HJ cruciform DNA, conferring on it an open structure. The RuvB hexamer acts as an ATP-dependent pump, pulling dsDNA into and through the RuvAB complex. HJ branch migration allows RuvC to scan DNA until it finds its consensus sequence, where it cleaves and resolves the cruciform DNA. The protein is Holliday junction branch migration complex subunit RuvA of Proteus mirabilis (strain HI4320).